We begin with the raw amino-acid sequence, 354 residues long: MAASSSVRPTPTGPQVFINFRGKDLRNGFLSFLEPAMREANINVFIDKDEVVGTDLVNLFVRIQESRVAVVIFSKDYTSSEWCLDELAEIKDCINQGGLNAIPIFYKLAPSSVLELKGGFGDTFRVLKEKYKNDPERTQKWQEALESIPKLKGLRLAEKSDRNEREFMNEMILEIQKALWQIAMKGNPKVESNSKGGFLVPARRLTIAHSDNPEKWTWSAIYDRPHKADIEIATMINTHALIKISGDFHTRKLIPGKKYEVVFIVSLDDTSLGWKNEVTLTLKVVMSDEAANVKAKKLCLDEYIGENWVDIPVGDFEAPQEKEDAKIFFSMYQLLNTERKSGLVVKGFAIRPAQ.

Positions 12–179 (TGPQVFINFR…EMILEIQKAL (168 aa)) constitute a TIR domain. Glutamate 86 is a catalytic residue.

It carries out the reaction NAD(+) + H2O = ADP-D-ribose + nicotinamide + H(+). In Arabidopsis thaliana (Mouse-ear cress), this protein is Protein PHLOEM PROTEIN 2-LIKE A8 (PP2A8).